The following is a 623-amino-acid chain: tRNA uridine 5-carboxymethylaminomethyl modification enzyme MnmG (623 aa).

Position 12–17 (12–17 (GAGHAG)) interacts with FAD. NAD(+) is bound at residue 272 to 286 (GPRYCPSIEDKINRF).

It belongs to the MnmG family. Homodimer. Heterotetramer of two MnmE and two MnmG subunits. FAD serves as cofactor.

The protein localises to the cytoplasm. Functionally, NAD-binding protein involved in the addition of a carboxymethylaminomethyl (cmnm) group at the wobble position (U34) of certain tRNAs, forming tRNA-cmnm(5)s(2)U34. The polypeptide is tRNA uridine 5-carboxymethylaminomethyl modification enzyme MnmG (Flavobacterium johnsoniae (strain ATCC 17061 / DSM 2064 / JCM 8514 / BCRC 14874 / CCUG 350202 / NBRC 14942 / NCIMB 11054 / UW101) (Cytophaga johnsonae)).